Here is a 145-residue protein sequence, read N- to C-terminus: Large ribosomal subunit protein uL11 (145 aa).

The protein belongs to the universal ribosomal protein uL11 family. In terms of assembly, part of the ribosomal stalk of the 50S ribosomal subunit. Interacts with L10 and the large rRNA to form the base of the stalk. L10 forms an elongated spine to which L12 dimers bind in a sequential fashion forming a multimeric L10(L12)X complex. In terms of processing, one or more lysine residues are methylated.

Forms part of the ribosomal stalk which helps the ribosome interact with GTP-bound translation factors. The sequence is that of Large ribosomal subunit protein uL11 from Aquifex aeolicus (strain VF5).